A 139-amino-acid chain; its full sequence is Nucleoside diphosphate kinase (139 aa).

Residues K10, F58, R86, T92, R103, and N113 each contribute to the ATP site. Catalysis depends on H116, which acts as the Pros-phosphohistidine intermediate.

It belongs to the NDK family. As to quaternary structure, homotetramer. Mg(2+) serves as cofactor.

The protein resides in the cytoplasm. It catalyses the reaction a 2'-deoxyribonucleoside 5'-diphosphate + ATP = a 2'-deoxyribonucleoside 5'-triphosphate + ADP. It carries out the reaction a ribonucleoside 5'-diphosphate + ATP = a ribonucleoside 5'-triphosphate + ADP. Functionally, major role in the synthesis of nucleoside triphosphates other than ATP. The ATP gamma phosphate is transferred to the NDP beta phosphate via a ping-pong mechanism, using a phosphorylated active-site intermediate. This is Nucleoside diphosphate kinase from Nitratidesulfovibrio vulgaris (strain DSM 19637 / Miyazaki F) (Desulfovibrio vulgaris).